The chain runs to 246 residues: 3-deoxy-manno-octulosonate cytidylyltransferase (246 aa).

The protein belongs to the KdsB family.

The protein localises to the cytoplasm. It carries out the reaction 3-deoxy-alpha-D-manno-oct-2-ulosonate + CTP = CMP-3-deoxy-beta-D-manno-octulosonate + diphosphate. The protein operates within nucleotide-sugar biosynthesis; CMP-3-deoxy-D-manno-octulosonate biosynthesis; CMP-3-deoxy-D-manno-octulosonate from 3-deoxy-D-manno-octulosonate and CTP: step 1/1. It functions in the pathway bacterial outer membrane biogenesis; lipopolysaccharide biosynthesis. In terms of biological role, activates KDO (a required 8-carbon sugar) for incorporation into bacterial lipopolysaccharide in Gram-negative bacteria. This chain is 3-deoxy-manno-octulosonate cytidylyltransferase, found in Rickettsia prowazekii (strain Madrid E).